A 575-amino-acid chain; its full sequence is Transcription factor COE2 (575 aa).

Residues 62–65 form an interaction with DNA region; it reads RKSN. The segment at 150–169 adopts a C5-type zinc-finger fold; it reads CRVLLTHEVMCSRCCEKKSC. Interaction with DNA regions lie at residues 196-203 and 235-238; these read NCLKTAGN and NNSK. In terms of domain architecture, IPT/TIG spans 253–336; it reads PCIKAISPSE…KGAPGRFIYT (84 aa). A compositionally biased stretch (polar residues) spans 441–453; it reads STQGNNQGYIRNT. The tract at residues 441-479 is disordered; that stretch reads STQGNNQGYIRNTSSISPRGYSSSSTPQQSNYSTSSNSM. Residues 454 to 479 show a composition bias toward low complexity; the sequence is SSISPRGYSSSSTPQQSNYSTSSNSM.

This sequence belongs to the COE family. As to quaternary structure, forms either a homodimer or a heterodimer with a related family member. Interacts with SIX1. In terms of tissue distribution, in adult expressed in olfactory epithelium and at a much lower level in Purkinje cells of the cerebellum. In embryo expressed in epithalamus, in cells near the ventricular zone of mesencephalon and on the ventral surface of rhombencephalon, in the developing vomeronasal organ, at a lower level in developing spinal cord. Not expressed in developing retina, inner ear, dorsal root ganglia, trigeminal ganglia and glossopharyngeal ganglia.

Its subcellular location is the nucleus. Functionally, transcription factor that, in osteoblasts, activates the decoy receptor for RANKL, TNFRSF11B, which in turn regulates osteoclast differentiation. Acts in synergy with the Wnt-responsive LEF1/CTNNB1 pathway. Recognizes variations of the palindromic sequence 5'-ATTCCCNNGGGAATT-3'. This chain is Transcription factor COE2 (Ebf2), found in Mus musculus (Mouse).